Reading from the N-terminus, the 215-residue chain is Cytochrome b6 (215 aa).

A helical transmembrane segment spans residues 32–52 (IFYCLGGITLTCFLVQIATGF). Heme c is bound at residue Cys-35. Heme b is bound by residues His-86 and His-100. Helical transmembrane passes span 90 to 110 (ASMMVLVMILHVFRVYLTGGF), 116 to 136 (LTWVTGVILAVLTVSFGVTGY), and 186 to 206 (LHTFVLPLLTAVFMLMHFLMI). Residues His-187 and His-202 each contribute to the heme b site.

The protein belongs to the cytochrome b family. PetB subfamily. As to quaternary structure, the 4 large subunits of the cytochrome b6-f complex are cytochrome b6, subunit IV (17 kDa polypeptide, PetD), cytochrome f and the Rieske protein, while the 4 small subunits are PetG, PetL, PetM and PetN. The complex functions as a dimer. Requires heme b as cofactor. It depends on heme c as a cofactor.

It localises to the plastid. It is found in the chloroplast thylakoid membrane. In terms of biological role, component of the cytochrome b6-f complex, which mediates electron transfer between photosystem II (PSII) and photosystem I (PSI), cyclic electron flow around PSI, and state transitions. This Adiantum capillus-veneris (Maidenhair fern) protein is Cytochrome b6.